The following is a 100-amino-acid chain: Protein translation factor SUI1 homolog (100 aa).

It belongs to the SUI1 family.

This is Protein translation factor SUI1 homolog from Thermoplasma volcanium (strain ATCC 51530 / DSM 4299 / JCM 9571 / NBRC 15438 / GSS1).